The sequence spans 438 residues: Prenyltransferase malE (438 aa).

Substrate is bound at residue E92. Positions 106, 192, 194, 259, 261, 346, and 411 each coordinate dimethylallyl diphosphate.

This sequence belongs to the tryptophan dimethylallyltransferase family.

It carries out the reaction (S)-3-(indol-3-ylmethyl)-6,7,8,8a-tetrahydropyrrolo[1,2-a]pyrazin-1-one + dimethylallyl diphosphate = (S)-3-{[2-(1,1-dimethylallyl)-indol-3-yl]methyl}-6,7,8,8a-tetrahydropyrrolo[1,2-a]pyrazin-1-one + diphosphate. The enzyme catalyses 1-hydroxy-3-(indol-3-ylmethyl)-6H,7H,8H-5lambda(5)-pyrrolo[1,2-a]pyrazine + dimethylallyl diphosphate = 1-hydroxy-3-{[2-(1,1-dimethylallyl)-indol-3-yl]methyl}-6H,7H,8H-5lambda(5)-pyrrolo[1,2-a]pyrazine + diphosphate. It participates in alkaloid biosynthesis. Functionally, prenyltransferase; part of the gene cluster that mediates the biosynthesis of malbrancheamide, a dichlorinated fungal indole alkaloid that belongs to a family of natural products containing a characteristic bicyclo[2.2.2]diazaoctane core. The first step of malbrancheamide biosynthesis involves coupling of L-proline and L-tryptophan by malG, a bimodular NRPS, to produce L-Pro-L-Trp aldehyde through reductive offloading. This compound undergoes spontaneous cyclization and dehydration to give a dienamine which is reverse prenylated at C-2 by malE. The other prenyltransferase present in the cluster, malB, displays modest activity, suggesting that may be a redundant gene in the pathway. Subsequently, a [4+2] Diels-Alder cyclo-addition catalyzed by the bifunctional enzyme malC forms the characteristic bicyclo[2.2.2]diazaoctane ring of premalbrancheamid. Finally, the flavin-dependent halogenase malA catalyzes the iterative dichlorination of the indole ring of premalbrancheamide to yield C-9 monochlorinated malbrancheamide B, C-8 monochlorinated isomalbrancheamide B, and dichlorinated malbrancheamide. MalA is also able to brominate premalbrancheamide at C-9 to yield malbrancheamide C, and, to a lesser extend, at C-8 to yield isomalbrancheamide C. Finally, malA can brominate C-9 monochlorinated malbrancheamide B at C-8 to yield malbrancheamide D, or C-8 monochlorinated isomalbrancheamide B at C-9 to produce isomalbrancheamide D. In Malbranchea aurantiaca, this protein is Prenyltransferase malE.